Consider the following 323-residue polypeptide: D-alanine--D-alanine ligase (323 aa).

In terms of domain architecture, ATP-grasp spans 105–305; the sequence is KQQLVPRGIP…YEDLVEAIVE (201 aa). 131–188 contacts ATP; it reads PLARPYVLKPVNEGSSVGVAIVTDESNYGNPIRRDAPGPWQEFRELLAEPFIRGRELT. Residues Asp-256, Glu-272, and Asn-274 each contribute to the Mg(2+) site.

Belongs to the D-alanine--D-alanine ligase family. Mg(2+) is required as a cofactor. The cofactor is Mn(2+).

Its subcellular location is the cytoplasm. It catalyses the reaction 2 D-alanine + ATP = D-alanyl-D-alanine + ADP + phosphate + H(+). It functions in the pathway cell wall biogenesis; peptidoglycan biosynthesis. Functionally, cell wall formation. In Erythrobacter litoralis (strain HTCC2594), this protein is D-alanine--D-alanine ligase.